We begin with the raw amino-acid sequence, 628 residues long: Propionate--CoA ligase (628 aa).

This sequence belongs to the ATP-dependent AMP-binding enzyme family.

It carries out the reaction propanoate + ATP + CoA = propanoyl-CoA + AMP + diphosphate. It functions in the pathway organic acid metabolism; propanoate degradation. Catalyzes the synthesis of propionyl-CoA from propionate and CoA. Also converts acetate to acetyl-CoA but with a lower specific activity. In Salmonella typhimurium (strain LT2 / SGSC1412 / ATCC 700720), this protein is Propionate--CoA ligase (prpE).